The chain runs to 120 residues: Chaperonin GroEL (120 aa).

23–27 lines the ATP pocket; that stretch reads DGTTT.

It belongs to the chaperonin (HSP60) family. As to quaternary structure, forms a cylinder of 14 subunits composed of two heptameric rings stacked back-to-back. Interacts with the co-chaperonin GroES.

The protein localises to the cytoplasm. It catalyses the reaction ATP + H2O + a folded polypeptide = ADP + phosphate + an unfolded polypeptide.. Its function is as follows. Together with its co-chaperonin GroES, plays an essential role in assisting protein folding. The GroEL-GroES system forms a nano-cage that allows encapsulation of the non-native substrate proteins and provides a physical environment optimized to promote and accelerate protein folding. The chain is Chaperonin GroEL from Mycobacterium scrofulaceum.